A 303-amino-acid chain; its full sequence is uncharacterized protein (303 aa).

One can recognise a Fe2OG dioxygenase domain in the interval 173–300 (KLPELLGQLN…RFTVNGWIRK (128 aa)).

Fe(2+) serves as cofactor. Requires L-ascorbate as cofactor.

This is an uncharacterized protein from Synechocystis sp. (strain ATCC 27184 / PCC 6803 / Kazusa).